The primary structure comprises 255 residues: 5'-nucleotidase SurE (255 aa).

A divalent metal cation-binding residues include aspartate 8, aspartate 9, serine 40, and asparagine 92.

Belongs to the SurE nucleotidase family. A divalent metal cation serves as cofactor.

It localises to the cytoplasm. It carries out the reaction a ribonucleoside 5'-phosphate + H2O = a ribonucleoside + phosphate. In terms of biological role, nucleotidase that shows phosphatase activity on nucleoside 5'-monophosphates. The chain is 5'-nucleotidase SurE from Brucella canis (strain ATCC 23365 / NCTC 10854 / RM-666).